The sequence spans 143 residues: Large ribosomal subunit protein uL11 (143 aa).

This sequence belongs to the universal ribosomal protein uL11 family. Part of the ribosomal stalk of the 50S ribosomal subunit. Interacts with L10 and the large rRNA to form the base of the stalk. L10 forms an elongated spine to which L12 dimers bind in a sequential fashion forming a multimeric L10(L12)X complex. One or more lysine residues are methylated.

In terms of biological role, forms part of the ribosomal stalk which helps the ribosome interact with GTP-bound translation factors. The chain is Large ribosomal subunit protein uL11 from Zymomonas mobilis subsp. mobilis (strain ATCC 31821 / ZM4 / CP4).